Reading from the N-terminus, the 462-residue chain is Ubiquitin carboxyl-terminal hydrolase calypso (462 aa).

A UCH catalytic domain is found at 29–260; it reads GWLELESDPG…IRFNLMAVVP (232 aa). Residue cysteine 115 is the Nucleophile of the active site. Histidine 197 serves as the catalytic Proton donor. A ULD domain is found at 357–385; the sequence is NYDKFICTFLSMLAHQGVLGELVSQHLLP. The tract at residues 387 to 462 is positively charged C-terminal tail required for binding nucleosomes; it reads KKIANRLNRQ…KGRNKCRKRK (76 aa). The segment covering 413–447 has biased composition (low complexity); that stretch reads GTNAAGSKSQQQQQQTQQQPQQTQTAKNGKSPGKT. Residues 413-462 form a disordered region; that stretch reads GTNAAGSKSQQQQQQTQQQPQQTQTAKNGKSPGKTPGRRRKGRNKCRKRK. Residues 448–462 show a composition bias toward basic residues; that stretch reads PGRRRKGRNKCRKRK.

It belongs to the peptidase C12 family. BAP1 subfamily. Catalytic component of the polycomb repressive deubiquitinase (PR-DUB) complex, at least composed of caly/calypso, Asx and sba (MBD5/6 homolog). The PR-DUB complex associates with nucleosomes to mediate deubiquitination of histone H2AK118ub1 substrates; the association requires the positively charged C-terminal tail of caly, probably due to direct binding of DNA. Interacts (via ULD domain) with Asx (via DEUBAD domain); the interaction produces a stable heterodimer with a composite binding site for ubiquitin. Homodimerizes (via coiled-coil hinge-region between the UCH and ULD domains) to mediate assembly of 2 copies of the caly-Asx heterodimer into a bisymmetric tetramer; dimerization enhances PR-DUB association with nucleosomes.

The protein resides in the nucleus. The catalysed reaction is Thiol-dependent hydrolysis of ester, thioester, amide, peptide and isopeptide bonds formed by the C-terminal Gly of ubiquitin (a 76-residue protein attached to proteins as an intracellular targeting signal).. Catalytic component of the polycomb repressive deubiquitinase (PR-DUB) complex, a complex that specifically mediates deubiquitination of histone H2A monoubiquitinated at 'Lys-119' (H2AK118ub1). Mediates bisymmetric organization of the PR-DUB complex and is involved in association with nucleosomes to mediate deubiquitination. Does not deubiquitinate monoubiquitinated histone H2B. Required to maintain the transcriptionally repressive state of homeotic genes throughout development. The PR-DUB complex has weak or no activity toward 'Lys-48'- and 'Lys-63'-linked polyubiquitin chains. Polycomb group (PcG) protein. The polypeptide is Ubiquitin carboxyl-terminal hydrolase calypso (Drosophila grimshawi (Hawaiian fruit fly)).